The sequence spans 318 residues: Transaldolase (318 aa).

Catalysis depends on K132, which acts as the Schiff-base intermediate with substrate.

The protein belongs to the transaldolase family. Type 1 subfamily. As to quaternary structure, homodimer.

The protein resides in the cytoplasm. It carries out the reaction D-sedoheptulose 7-phosphate + D-glyceraldehyde 3-phosphate = D-erythrose 4-phosphate + beta-D-fructose 6-phosphate. Its pathway is carbohydrate degradation; pentose phosphate pathway; D-glyceraldehyde 3-phosphate and beta-D-fructose 6-phosphate from D-ribose 5-phosphate and D-xylulose 5-phosphate (non-oxidative stage): step 2/3. Transaldolase is important for the balance of metabolites in the pentose-phosphate pathway. The polypeptide is Transaldolase (Shewanella baltica (strain OS185)).